We begin with the raw amino-acid sequence, 249 residues long: Aliphatic sulfonates import ATP-binding protein SsuB 2 (249 aa).

The ABC transporter domain occupies 15-231 (VHVRDLARRF…DHGDPRFAQF (217 aa)). Residue 47–54 (GRSGSGKS) coordinates ATP.

Belongs to the ABC transporter superfamily. Aliphatic sulfonates importer (TC 3.A.1.17.2) family. As to quaternary structure, the complex is composed of two ATP-binding proteins (SsuB), two transmembrane proteins (SsuC) and a solute-binding protein (SsuA).

The protein localises to the cell inner membrane. The enzyme catalyses ATP + H2O + aliphatic sulfonate-[sulfonate-binding protein]Side 1 = ADP + phosphate + aliphatic sulfonateSide 2 + [sulfonate-binding protein]Side 1.. Part of the ABC transporter complex SsuABC involved in aliphatic sulfonates import. Responsible for energy coupling to the transport system. In Rhizobium johnstonii (strain DSM 114642 / LMG 32736 / 3841) (Rhizobium leguminosarum bv. viciae), this protein is Aliphatic sulfonates import ATP-binding protein SsuB 2.